A 466-amino-acid polypeptide reads, in one-letter code: Argininosuccinate lyase (466 aa).

This sequence belongs to the lyase 1 family. Argininosuccinate lyase subfamily.

The protein resides in the cytoplasm. The catalysed reaction is 2-(N(omega)-L-arginino)succinate = fumarate + L-arginine. It functions in the pathway amino-acid biosynthesis; L-arginine biosynthesis; L-arginine from L-ornithine and carbamoyl phosphate: step 3/3. The protein is Argininosuccinate lyase of Brucella abortus (strain S19).